Reading from the N-terminus, the 207-residue chain is BON1-associated protein 2 (207 aa).

One can recognise a C2 domain in the interval 1-112; that stretch reads MSYSTFKRSL…GFAPQGHLNF (112 aa).

As to quaternary structure, interacts with BON1, BON2 and BON3. Expressed in roots, leaves, stems and flowers.

Its subcellular location is the membrane. Its function is as follows. Negative regulator of cell death and defense responses. Exhibits calcium-dependent phospholipid binding properties. This Arabidopsis thaliana (Mouse-ear cress) protein is BON1-associated protein 2 (BAP2).